Reading from the N-terminus, the 415-residue chain is S-inosyl-L-homocysteine hydrolase (415 aa).

The substrate site is built by Asp123 and Glu148. Residue 149 to 151 participates in NAD(+) binding; that stretch reads TTT. Substrate is bound by residues Lys178 and Asp182. NAD(+)-binding positions include Asn183, 212-217, Glu235, 291-293, and Asn337; these read GYGWCG and AGH.

The protein belongs to the adenosylhomocysteinase family. Exists both as a homotetramer and a homodimer, in a 4:1 ratio. NAD(+) serves as cofactor.

The protein resides in the cytoplasm. It carries out the reaction S-inosyl-L-homocysteine + H2O = L-homocysteine + inosine. Its pathway is amino-acid biosynthesis; S-adenosyl-L-methionine biosynthesis. Catalyzes the hydrolysis of S-inosyl-L-homocysteine (SIH) to L-homocysteine (Hcy) and inosine. Likely functions in a S-adenosyl-L-methionine (SAM) recycling pathway from S-adenosyl-L-homocysteine (SAH) produced from SAM-dependent methylation reactions. Can also catalyze the reverse reaction in vitro, i.e. the synthesis of SIH from Hcy and inosine. Is specific for SIH and inosine as it is unable to either hydrolyze SAH or synthesize SAH from adenosine and Hcy. This Methanocaldococcus jannaschii (strain ATCC 43067 / DSM 2661 / JAL-1 / JCM 10045 / NBRC 100440) (Methanococcus jannaschii) protein is S-inosyl-L-homocysteine hydrolase.